Here is a 559-residue protein sequence, read N- to C-terminus: Palmitoyltransferase AKR1 (559 aa).

3 ANK repeats span residues 8 to 38 (QGFN…PVDT), 42 to 71 (LGHT…RVDT), and 75 to 104 (EGFT…DIKA). The next 3 membrane-spanning stretches (helical) occupy residues 148–168 (LMVL…FLFG), 192–212 (TAVF…YLLG), and 217–237 (LLWM…FFYG). The region spanning 272–322 (HFCVSCIAQRPLRSKHCKFCNRCVAKFDHHCPWIYNCIGAKNHRAFLIFLA) is the DHHC domain. Residue Cys302 is the S-palmitoyl cysteine intermediate of the active site. Helical transmembrane passes span 316–336 (AFLI…YLSF) and 373–393 (LAFW…VQLY).

The protein belongs to the DHHC palmitoyltransferase family. AKR/ZDHHC17 subfamily.

The protein resides in the early endosome membrane. It is found in the golgi apparatus membrane. The enzyme catalyses L-cysteinyl-[protein] + hexadecanoyl-CoA = S-hexadecanoyl-L-cysteinyl-[protein] + CoA. Its function is as follows. Palmitoyltransferase specific for casein kinase 1. The chain is Palmitoyltransferase AKR1 from Mortierella alpina (Oleaginous fungus).